A 590-amino-acid chain; its full sequence is Phosphomethylpyrimidine synthase (590 aa).

Substrate-binding positions include Asn197, Met226, Tyr255, His291, 311 to 313 (SRG), 352 to 355 (DGLR), and Glu391. Residue His395 participates in Zn(2+) binding. Tyr418 contributes to the substrate binding site. His459 contacts Zn(2+). Residues Cys539, Cys542, and Cys547 each coordinate [4Fe-4S] cluster.

The protein belongs to the ThiC family. The cofactor is [4Fe-4S] cluster.

The enzyme catalyses 5-amino-1-(5-phospho-beta-D-ribosyl)imidazole + S-adenosyl-L-methionine = 4-amino-2-methyl-5-(phosphooxymethyl)pyrimidine + CO + 5'-deoxyadenosine + formate + L-methionine + 3 H(+). Its pathway is cofactor biosynthesis; thiamine diphosphate biosynthesis. In terms of biological role, catalyzes the synthesis of the hydroxymethylpyrimidine phosphate (HMP-P) moiety of thiamine from aminoimidazole ribotide (AIR) in a radical S-adenosyl-L-methionine (SAM)-dependent reaction. In Bacillus subtilis (strain 168), this protein is Phosphomethylpyrimidine synthase.